Consider the following 395-residue polypeptide: General transcription factor IIH subunit 2 (395 aa).

One can recognise a VWFA domain in the interval 60–236 (HLYVVVDGSR…HYKELLTHHV (177 aa)). Phosphotyrosine is present on Tyr-95. The segment at 291–308 (CPQCRAKYCELPVECKIC) adopts a C4-type zinc-finger fold.

This sequence belongs to the GTF2H2 family. As to quaternary structure, component of the TFIID-containing RNA polymerase II pre-initiation complex that is composed of TBP and at least GTF2A1, GTF2A2, GTF2E1, GTF2E2, GTF2F1, GTF2H2, GTF2H3, GTF2H4, GTF2H5, GTF2B, TCEA1, ERCC2 and ERCC3. Component of the 7-subunit TFIIH core complex composed of XPB/ERCC3, XPD/ERCC2, GTF2H1, GTF2H2, GTF2H3, GTF2H4 and GTF2H5, which is active in NER. The core complex associates with the 3-subunit CDK-activating kinase (CAK) module composed of CCNH/cyclin H, CDK7 and MNAT1 to form the 10-subunit holoenzyme (holo-TFIIH) active in transcription. Interacts with XPB, XPD, GTF2H1 and GTF2H3. (Microbial infection) Interacts with varicella-zoster virus IE63 protein. In terms of tissue distribution, widely expressed, with higher expression in skeletal muscle.

Its subcellular location is the nucleus. Functionally, component of the general transcription and DNA repair factor IIH (TFIIH) core complex, which is involved in general and transcription-coupled nucleotide excision repair (NER) of damaged DNA and, when complexed to CAK, in RNA transcription by RNA polymerase II. In NER, TFIIH acts by opening DNA around the lesion to allow the excision of the damaged oligonucleotide and its replacement by a new DNA fragment. In transcription, TFIIH has an essential role in transcription initiation. When the pre-initiation complex (PIC) has been established, TFIIH is required for promoter opening and promoter escape. Phosphorylation of the C-terminal tail (CTD) of the largest subunit of RNA polymerase II by the kinase module CAK controls the initiation of transcription. The N-terminus of GTF2H2 interacts with and regulates XPD whereas an intact C-terminus is required for a successful escape of RNAP II form the promoter. This chain is General transcription factor IIH subunit 2 (GTF2H2), found in Homo sapiens (Human).